Reading from the N-terminus, the 252-residue chain is 5-oxoprolinase subunit A 1 (252 aa).

The protein belongs to the LamB/PxpA family. As to quaternary structure, forms a complex composed of PxpA, PxpB and PxpC.

It carries out the reaction 5-oxo-L-proline + ATP + 2 H2O = L-glutamate + ADP + phosphate + H(+). Catalyzes the cleavage of 5-oxoproline to form L-glutamate coupled to the hydrolysis of ATP to ADP and inorganic phosphate. This is 5-oxoprolinase subunit A 1 from Pseudomonas aeruginosa (strain ATCC 15692 / DSM 22644 / CIP 104116 / JCM 14847 / LMG 12228 / 1C / PRS 101 / PAO1).